Here is a 148-residue protein sequence, read N- to C-terminus: Large ribosomal subunit protein uL15 (148 aa).

Residues 1 to 30 (MPSRLRKTRKLRGHVSHGHGRIGKHRKHPG) are compositionally biased toward basic residues. Positions 1 to 38 (MPSRLRKTRKLRGHVSHGHGRIGKHRKHPGGRGNAGGL) are disordered. Histidine 39 bears the (3S)-3-hydroxyhistidine mark. N6-acetyllysine occurs at positions 47 and 55. A Phosphoserine modification is found at serine 68. Lysine 110 carries the post-translational modification N6-acetyllysine.

This sequence belongs to the universal ribosomal protein uL15 family. In terms of assembly, component of the large ribosomal subunit. In terms of processing, hydroxylated on His-39 by MINA.

The protein resides in the cytoplasm. In terms of biological role, component of the large ribosomal subunit. The ribosome is a large ribonucleoprotein complex responsible for the synthesis of proteins in the cell. This is Large ribosomal subunit protein uL15 (RPL27A) from Homo sapiens (Human).